An 870-amino-acid chain; its full sequence is Protein RRP6-like 2 (870 aa).

The 3'-5' exonuclease domain occupies 263 to 428; it reads VQEVKDLKEL…YIYDLIKLEL (166 aa). The 81-residue stretch at 479–559 folds into the HRDC domain; the sequence is NAAQLAIVAG…RQSMQHYAAF (81 aa). 4 disordered regions span residues 583–605, 649–668, 688–775, and 821–870; these read SEKK…SSQL, GALL…EKVK, TEKV…EDEP, and FGEG…SFKN. Composition is skewed to basic and acidic residues over residues 720–729 and 821–834; these read SKEDGVKELK and FGEG…KREA. The segment covering 840 to 849 has biased composition (polar residues); sequence KGSTQEQSEF.

It is found in the nucleus. It localises to the nucleolus. Its subcellular location is the cytoplasm. Its function is as follows. Acts as an important epigenetic regulator through multiple silencing mechanisms. Involved in association with RRP6L1 in the silencing of the solo LTR locus. Controls levels of non-coding RNAs (ncRNAs) from the solo LTR locus. Seems to function independently of the RNA-mediated gene silencing (RdDM) pathway. Functions redundantly with RRP6L1 in the regulation of FLC locus. Participates in the maintenance of trimethylated 'Lys-27' (H3K27me3) at FLC locus via the regulation of antisense long non-coding RNAs (lncRNAs) and the regulation of diverse antisense RNAs derived from the FLC locus. Seems not involved in the exosomal RNA degradation. May be involved in poly(A)-mediated RNA degradation. The protein is Protein RRP6-like 2 of Arabidopsis thaliana (Mouse-ear cress).